Here is a 409-residue protein sequence, read N- to C-terminus: NADH-quinone oxidoreductase subunit D (409 aa).

This sequence belongs to the complex I 49 kDa subunit family. In terms of assembly, NDH-1 is composed of 14 different subunits. Subunits NuoB, C, D, E, F, and G constitute the peripheral sector of the complex.

It localises to the cell inner membrane. It carries out the reaction a quinone + NADH + 5 H(+)(in) = a quinol + NAD(+) + 4 H(+)(out). In terms of biological role, NDH-1 shuttles electrons from NADH, via FMN and iron-sulfur (Fe-S) centers, to quinones in the respiratory chain. The immediate electron acceptor for the enzyme in this species is believed to be ubiquinone. Couples the redox reaction to proton translocation (for every two electrons transferred, four hydrogen ions are translocated across the cytoplasmic membrane), and thus conserves the redox energy in a proton gradient. The sequence is that of NADH-quinone oxidoreductase subunit D from Helicobacter pylori (strain P12).